Here is a 388-residue protein sequence, read N- to C-terminus: 4-hydroxy-3-methylbut-2-en-1-yl diphosphate synthase (flavodoxin) (388 aa).

[4Fe-4S] cluster is bound by residues Cys281, Cys284, Cys316, and Glu323.

It belongs to the IspG family. It depends on [4Fe-4S] cluster as a cofactor.

It carries out the reaction (2E)-4-hydroxy-3-methylbut-2-enyl diphosphate + oxidized [flavodoxin] + H2O + 2 H(+) = 2-C-methyl-D-erythritol 2,4-cyclic diphosphate + reduced [flavodoxin]. It functions in the pathway isoprenoid biosynthesis; isopentenyl diphosphate biosynthesis via DXP pathway; isopentenyl diphosphate from 1-deoxy-D-xylulose 5-phosphate: step 5/6. Its function is as follows. Converts 2C-methyl-D-erythritol 2,4-cyclodiphosphate (ME-2,4cPP) into 1-hydroxy-2-methyl-2-(E)-butenyl 4-diphosphate. The sequence is that of 4-hydroxy-3-methylbut-2-en-1-yl diphosphate synthase (flavodoxin) from Paenarthrobacter aurescens (strain TC1).